The primary structure comprises 254 residues: uncharacterized protein (254 aa).

This is an uncharacterized protein from Aedes vexans (Inland floodwater mosquito).